Reading from the N-terminus, the 404-residue chain is Phosphopentomutase (404 aa).

Mn(2+) contacts are provided by Asp-10, Asp-303, His-308, Asp-344, His-345, and His-356.

The protein belongs to the phosphopentomutase family. Mn(2+) is required as a cofactor.

It is found in the cytoplasm. The enzyme catalyses 2-deoxy-alpha-D-ribose 1-phosphate = 2-deoxy-D-ribose 5-phosphate. It catalyses the reaction alpha-D-ribose 1-phosphate = D-ribose 5-phosphate. It functions in the pathway carbohydrate degradation; 2-deoxy-D-ribose 1-phosphate degradation; D-glyceraldehyde 3-phosphate and acetaldehyde from 2-deoxy-alpha-D-ribose 1-phosphate: step 1/2. In terms of biological role, isomerase that catalyzes the conversion of deoxy-ribose 1-phosphate (dRib-1-P) and ribose 1-phosphate (Rib-1-P) to deoxy-ribose 5-phosphate (dRib-5-P) and ribose 5-phosphate (Rib-5-P), respectively. The protein is Phosphopentomutase of Shewanella sp. (strain ANA-3).